A 387-amino-acid polypeptide reads, in one-letter code: Putative protein FAM157C (387 aa).

Disordered stretches follow at residues 1 to 21 (MGPL…PLPK), 182 to 226 (TARP…GAEP), and 329 to 353 (RARD…TSSG).

It belongs to the FAM157 family.

The chain is Putative protein FAM157C (FAM157C) from Homo sapiens (Human).